Reading from the N-terminus, the 1842-residue chain is Plexin-B2 (1842 aa).

An N-terminal signal peptide occupies residues 1-19 (MALPLWALTFLGLTGLGLS). Residues 20 to 468 (LRSRKPESFR…TQDKVFRLPV (449 aa)) enclose the Sema domain. At 20–1201 (LRSRKPESFR…EYDTRASDVP (1182 aa)) the chain is on the extracellular side. Intrachain disulfides connect Cys-78–Cys-87 and Cys-112–Cys-120. N-linked (GlcNAc...) asparagine glycans are attached at residues Asn-127 and Asn-242. Disulfide bonds link Cys-250/Cys-366, Cys-266/Cys-313, and Cys-331/Cys-353. 2 N-linked (GlcNAc...) asparagine glycosylation sites follow: Asn-393 and Asn-451. 5 disulfides stabilise this stretch: Cys-471-Cys-488, Cys-477-Cys-520, Cys-480-Cys-497, Cys-491-Cys-503, and Cys-557-Cys-576. Asn-798 carries N-linked (GlcNAc...) asparagine glycosylation. IPT/TIG domains lie at 806 to 895 (PVIT…QFTY), 898 to 982 (PQPL…SFTY), and 986 to 1095 (PMIR…VFEY). 3 N-linked (GlcNAc...) asparagine glycosylation sites follow: Asn-919, Asn-1053, and Asn-1072. Residues 1202 to 1222 (LSLILPLVMVPMVFIIVVSIY) traverse the membrane as a helical segment. The Cytoplasmic portion of the chain corresponds to 1223-1842 (CYWRKSQQAE…AALENKVTDL (620 aa)). A phosphoserine mark is found at Ser-1240, Ser-1248, and Ser-1574.

This sequence belongs to the plexin family. Monomer, and heterodimer with PLXNB1. Interacts with MET, ARHGEF11 and ARHGEF12. May also interact with MST1R. Detected in macrophages from spleen and bone marrow (at protein level). Detected in granule cells in the developing cerebellum, dentate gyrus and olfactory bulb. Expressed in neurons and glia in the developing hippocampus.

It is found in the cell membrane. Its function is as follows. Cell surface receptor for SEMA4C, SEMA4D and SEMA4G that plays an important role in cell-cell signaling. Plays a role in glutamatergic synapse development and is required for SEMA4A-mediated excitatory synapse development. Binding to class 4 semaphorins promotes downstream activation of RHOA and phosphorylation of ERBB2 at 'Tyr-1248'. Also acts as a cell surface receptor for angiogenin (ANG); promoting ANG endocytosis and translocation to the cytoplasm or nucleus. Required for normal differentiation and migration of neuronal cells during brain corticogenesis and for normal embryonic brain development. Regulates the migration of cerebellar granule cells in the developing brain. Plays a role in RHOA activation and subsequent changes of the actin cytoskeleton. Plays a role in axon guidance, invasive growth and cell migration. May modulate the activity of RAC1 and CDC42. Down-regulates macrophage migration in wound-healing assays (in vitro). The sequence is that of Plexin-B2 from Mus musculus (Mouse).